The primary structure comprises 89 residues: Small ribosomal subunit protein uS15 (89 aa).

The protein belongs to the universal ribosomal protein uS15 family. As to quaternary structure, part of the 30S ribosomal subunit. Forms a bridge to the 50S subunit in the 70S ribosome, contacting the 23S rRNA.

One of the primary rRNA binding proteins, it binds directly to 16S rRNA where it helps nucleate assembly of the platform of the 30S subunit by binding and bridging several RNA helices of the 16S rRNA. Its function is as follows. Forms an intersubunit bridge (bridge B4) with the 23S rRNA of the 50S subunit in the ribosome. This Tolumonas auensis (strain DSM 9187 / NBRC 110442 / TA 4) protein is Small ribosomal subunit protein uS15.